The primary structure comprises 188 residues: UPF0340 protein SSU98_0310 (188 aa).

The protein belongs to the UPF0340 family.

In Streptococcus suis (strain 98HAH33), this protein is UPF0340 protein SSU98_0310.